Here is a 373-residue protein sequence, read N- to C-terminus: Spore germination protein KB (373 aa).

10 helical membrane passes run 11–31 (LFVM…PGSM), 37–57 (WIAV…YQGI), 78–98 (LSWL…ARVL), 105–125 (LLTF…LMVV), 143–163 (LLFG…IVSG), 185–205 (VFTQ…MIFP), 219–239 (IAMA…ISVL), 269–289 (VFFM…YLYA), 306–326 (LAYP…TNFS), and 338–358 (LYIH…VAVW).

This sequence belongs to the amino acid-polyamine-organocation (APC) superfamily. Spore germination protein (SGP) (TC 2.A.3.9) family.

It localises to the cell membrane. Functionally, involved in the germination response to the combination of glucose, fructose, L-asparagine, and KCl. The protein is Spore germination protein KB (gerKB) of Bacillus subtilis (strain 168).